Here is a 489-residue protein sequence, read N- to C-terminus: Amino acid transporter AVT6E (489 aa).

11 consecutive transmembrane segments (helical) span residues 76-96 (GIYG…IMAL), 102-122 (VLGL…SEIS), 156-176 (ICII…MGDV), 201-221 (VLIL…NKID), 227-247 (SAAS…VATI), 269-289 (ILDL…HFNV), 310-330 (ITTA…YLLF), 357-377 (IVRI…HFSL), 404-424 (VVLL…WTAF), 425-445 (KFTG…LIAL), and 461-481 (VSWL…IGNI).

The protein belongs to the amino acid/polyamine transporter 2 family. Amino acid/auxin permease (AAAP) (TC 2.A.18.6) subfamily.

Its subcellular location is the endoplasmic reticulum membrane. It localises to the vacuole membrane. The polypeptide is Amino acid transporter AVT6E (Arabidopsis thaliana (Mouse-ear cress)).